Consider the following 383-residue polypeptide: uncharacterized protein (383 aa).

It belongs to the peptidase M20 family.

This is an uncharacterized protein from Staphylococcus aureus (strain N315).